A 136-amino-acid polypeptide reads, in one-letter code: uncharacterized protein (136 aa).

A helical transmembrane segment spans residues 102-118; the sequence is FVIVFFFFSFSLSISCV.

Its subcellular location is the membrane. This is an uncharacterized protein from Saccharomyces cerevisiae (strain ATCC 204508 / S288c) (Baker's yeast).